The following is a 736-amino-acid chain: Subtilisin-like protease SBT4.11 (736 aa).

A signal peptide spans 1–25; it reads MAKRGAFSSFHSFLIVLLFLNSVLA. Residues 26–113 constitute a propeptide, activation peptide; the sequence is VTHGHQDKQV…VFPNKKLKLQ (88 aa). Positions 35-112 constitute an Inhibitor I9 domain; that stretch reads VYIVYMGSLP…SVFPNKKLKL (78 aa). In terms of domain architecture, Peptidase S8 spans 117–579; it reads SWDFMGLKEG…AGHVDPIAAT (463 aa). The Charge relay system role is filled by D145. N176 carries an N-linked (GlcNAc...) asparagine glycan. H200 functions as the Charge relay system in the catalytic mechanism. N-linked (GlcNAc...) asparagine glycosylation is found at N215 and N223. Positions 355–437 constitute a PA domain; the sequence is KFPLVYGKSA…GLQKDDFESV (83 aa). The active-site Charge relay system is the S518. 5 N-linked (GlcNAc...) asparagine glycosylation sites follow: N555, N602, N638, N646, and N656.

This sequence belongs to the peptidase S8 family. The C-terminal propeptide is autocleaved.

It is found in the secreted. The protein is Subtilisin-like protease SBT4.11 of Arabidopsis thaliana (Mouse-ear cress).